The sequence spans 313 residues: Pantothenate synthetase (313 aa).

43–50 (MGALHEGH) provides a ligand contact to ATP. Histidine 50 serves as the catalytic Proton donor. Glutamine 75 lines the (R)-pantoate pocket. A beta-alanine-binding site is contributed by glutamine 75. 161-164 (GEKD) is a binding site for ATP. Glutamine 167 serves as a coordination point for (R)-pantoate. Residues valine 190 and 198–201 (LSSR) contribute to the ATP site.

This sequence belongs to the pantothenate synthetase family. In terms of assembly, homodimer.

The protein localises to the cytoplasm. The catalysed reaction is (R)-pantoate + beta-alanine + ATP = (R)-pantothenate + AMP + diphosphate + H(+). It functions in the pathway cofactor biosynthesis; (R)-pantothenate biosynthesis; (R)-pantothenate from (R)-pantoate and beta-alanine: step 1/1. Catalyzes the condensation of pantoate with beta-alanine in an ATP-dependent reaction via a pantoyl-adenylate intermediate. The protein is Pantothenate synthetase of Mycobacterium sp. (strain JLS).